Consider the following 406-residue polypeptide: Aminomethyltransferase, mitochondrial (406 aa).

The transit peptide at 1 to 29 directs the protein to the mitochondrion; that stretch reads MRGGLWQLGQSITRRLAQADKKTIGRRCF. E234, R265, and Y403 together coordinate substrate.

It belongs to the GcvT family. In terms of assembly, the glycine cleavage system is composed of four proteins: P, T, L and H.

It localises to the mitochondrion. The enzyme catalyses N(6)-[(R)-S(8)-aminomethyldihydrolipoyl]-L-lysyl-[protein] + (6S)-5,6,7,8-tetrahydrofolate = N(6)-[(R)-dihydrolipoyl]-L-lysyl-[protein] + (6R)-5,10-methylene-5,6,7,8-tetrahydrofolate + NH4(+). Functionally, the glycine cleavage system catalyzes the degradation of glycine. This Solanum tuberosum (Potato) protein is Aminomethyltransferase, mitochondrial (GDCST).